A 181-amino-acid chain; its full sequence is Protein csk22 (181 aa).

The next 5 helical transmembrane spans lie at 5-22 (LQSV…YKKI), 35-57 (WLFT…SAIH), 61-78 (YGYL…VFFA), 91-113 (IYFR…RFLY), and 140-162 (LTIG…IIKL).

It is found in the cell membrane. This chain is Protein csk22 (csk22), found in Bacillus subtilis (strain 168).